Reading from the N-terminus, the 588-residue chain is Adenine deaminase (588 aa).

This sequence belongs to the metallo-dependent hydrolases superfamily. Adenine deaminase family. As to quaternary structure, homodimer. Mn(2+) is required as a cofactor.

It carries out the reaction adenine + H2O + H(+) = hypoxanthine + NH4(+). The protein is Adenine deaminase of Shigella boydii serotype 4 (strain Sb227).